The sequence spans 166 residues: Ubiquitin-conjugating enzyme E2 13 (166 aa).

The region spanning 4 to 164 (QACLLLQKQL…VSRCVRKSQE (161 aa)) is the UBC core domain. The active-site Glycyl thioester intermediate is C89.

It belongs to the ubiquitin-conjugating enzyme family.

It carries out the reaction S-ubiquitinyl-[E1 ubiquitin-activating enzyme]-L-cysteine + [E2 ubiquitin-conjugating enzyme]-L-cysteine = [E1 ubiquitin-activating enzyme]-L-cysteine + S-ubiquitinyl-[E2 ubiquitin-conjugating enzyme]-L-cysteine.. Its pathway is protein modification; protein ubiquitination. Its function is as follows. Accepts the ubiquitin from the E1 complex and catalyzes its covalent attachment to other proteins. Involved in the formation of multiubiquitin chains. Signal the protein for selective degradation. This Arabidopsis thaliana (Mouse-ear cress) protein is Ubiquitin-conjugating enzyme E2 13 (UBC13).